The sequence spans 175 residues: Alpha-crystallin B chain (175 aa).

M1 is subject to N-acetylmethionine. Residues S19, S45, and S59 each carry the phosphoserine modification. The 109-residue stretch at 56 to 164 folds into the sHSP domain; it reads RAPSWIDTGL…PERTIPITRE (109 aa). H83 serves as a coordination point for Zn(2+). The residue at position 92 (K92) is an N6-acetyllysine. Zn(2+) is bound by residues H104, E106, H111, and H119. Residues 145 to 175 are disordered; the sequence is VNGPRKQVSGPERTIPITREEKPAVAAAPKK. An N6-acetyllysine modification is found at K166.

It belongs to the small heat shock protein (HSP20) family. As to quaternary structure, heteromer composed of three CRYAA and one CRYAB subunits. Aggregates with homologous proteins, including the small heat shock protein HSPB1, to form large heteromeric complexes. Inter-subunit bridging via zinc ions enhances stability, which is crucial as there is no protein turn over in the lens. Interacts with HSPBAP1. Interacts with TTN/titin. Interacts with TMEM109; in the cellular response to DNA damage. Interacts with DES; binds rapidly during early stages of DES filament assembly and a reduced binding seen in the later stages. Interacts with TMED10; the interaction mediates the translocation from the cytoplasm into the ERGIC (endoplasmic reticulum-Golgi intermediate compartment) and thereby secretion. Interacts with ATP6V1A and with MTOR, forming a ternary complex. As to expression, abundantly expressed in the lens of the eye. Expressed in ventricular cardiomyocytes of the heart. Also expressed in skeletal muscle and the kidney.

The protein resides in the cytoplasm. It localises to the cytosol. The protein localises to the nucleus. It is found in the secreted. Its subcellular location is the lysosome. May contribute to the transparency and refractive index of the lens. Has chaperone-like activity, preventing aggregation of various proteins under a wide range of stress conditions. In lens epithelial cells, stabilizes the ATP6V1A protein, preventing its degradation by the proteasome. This is Alpha-crystallin B chain from Mus musculus (Mouse).